Reading from the N-terminus, the 996-residue chain is P3N-PIPO polyprotein (996 aa).

The Peptidase S30 domain occupies Val-173 to Tyr-313. Residues His-226, Glu-235, and Ser-267 each act as for P1 proteinase activity in the active site. The short motif at Lys-365–Cys-368 is the Involved in interaction with stylet and aphid transmission element. The Involved in virions binding and aphid transmission signature appears at Pro-621–Lys-623. The region spanning Met-647–Gly-769 is the Peptidase C6 domain. Catalysis depends on for helper component proteinase activity residues Cys-655 and His-728.

The protein belongs to the potyviridae P3N-PIPO polyprotein family. In terms of assembly, interacts (via PIPO domain) with host PCaP1 protein; this interaction may help to anchor the movement complex to the plasma membrane from which the complex could move to the plasmodesmata. In terms of processing, potyviral RNA is expressed as two polyproteins which undergo post-translational proteolytic processing. Genome polyprotein is processed by NIa-pro, P1 and HC-pro proteinases resulting in the production of at least ten individual proteins. P3N-PIPO is cleaved by P1 and HC-pro proteinases resulting in the production of three individual proteins. The P1 proteinase and the HC-pro cleave only their respective C-termini autocatalytically.

Its subcellular location is the host cell junction. The protein resides in the host plasmodesma. It catalyses the reaction Hydrolyzes a Gly-|-Gly bond at its own C-terminus, commonly in the sequence -Tyr-Xaa-Val-Gly-|-Gly, in the processing of the potyviral polyprotein.. Functionally, required for aphid transmission and also has proteolytic activity. Only cleaves a Gly-Gly dipeptide at its own C-terminus. Interacts with virions and aphid stylets. Acts as a suppressor of RNA-mediated gene silencing, also known as post-transcriptional gene silencing (PTGS), a mechanism of plant viral defense that limits the accumulation of viral RNAs. May have RNA-binding activity. Allows efficient cell to cell propagation, by bypassing the host cell wall barrier. Transports viral genome to neighboring plant cells directly through plasmosdesmata, without any budding. The polypeptide is P3N-PIPO polyprotein (Zucchini yellow mosaic virus (strain Reunion Island) (ZYMV)).